Reading from the N-terminus, the 507-residue chain is Inactive alanine aminotransferase (507 aa).

The pyridoxal 5'-phosphate site is built by alanine 173, serine 174, tyrosine 199, asparagine 255, and serine 324. Lysine 327 carries the post-translational modification N6-(pyridoxal phosphate)lysine. Arginine 336 is a pyridoxal 5'-phosphate binding site.

This sequence belongs to the class-I pyridoxal-phosphate-dependent aminotransferase family. Alanine aminotransferase subfamily. Homodimer. The cofactor is pyridoxal 5'-phosphate.

The protein resides in the cytoplasm. The protein localises to the nucleus. In terms of biological role, inactive alanine aminotransferase. Forms a catalytically active Schiff base with PLP, but lacks alanine transaminase activity, probably due to an altered structural conformation of the dimeric enzyme. This suggests this protein may have a yet undiscovered physiological function. This is Inactive alanine aminotransferase (ALT2) from Saccharomyces cerevisiae (strain ATCC 204508 / S288c) (Baker's yeast).